Here is a 215-residue protein sequence, read N- to C-terminus: tRNA (guanine-N(7)-)-methyltransferase (215 aa).

S-adenosyl-L-methionine-binding residues include Glu-44, Glu-69, Asp-96, and Asp-118. Asp-118 is a catalytic residue. Lys-122 provides a ligand contact to substrate. Residues 124–129 (RHEKRR) form an interaction with RNA region. Substrate-binding positions include Asp-154 and 192–195 (TEYE).

Belongs to the class I-like SAM-binding methyltransferase superfamily. TrmB family.

It catalyses the reaction guanosine(46) in tRNA + S-adenosyl-L-methionine = N(7)-methylguanosine(46) in tRNA + S-adenosyl-L-homocysteine. Its pathway is tRNA modification; N(7)-methylguanine-tRNA biosynthesis. In terms of biological role, catalyzes the formation of N(7)-methylguanine at position 46 (m7G46) in tRNA. This is tRNA (guanine-N(7)-)-methyltransferase from Limosilactobacillus fermentum (strain NBRC 3956 / LMG 18251) (Lactobacillus fermentum).